The primary structure comprises 49 residues: Turripeptide OL47 (49 aa).

Residues 28–49 (RSDTEKKCTGGPDPCPPRQWPD) form a disordered region. Pro residues predominate over residues 40 to 49 (DPCPPRQWPD).

Post-translationally, contains 4 disulfide bonds. As to expression, expressed by the venom duct.

It is found in the secreted. Its function is as follows. Acts as a neurotoxin by inhibiting an ion channel. The protein is Turripeptide OL47 of Iotyrris olangoensis (Sea snail).